Reading from the N-terminus, the 281-residue chain is uncharacterized protein (281 aa).

A helical transmembrane segment spans residues 5–27; that stretch reads AYVTVIYGNNIYLTGALVLGYTL.

Its subcellular location is the membrane. This is an uncharacterized protein from Acanthamoeba polyphaga mimivirus (APMV).